The following is a 492-amino-acid chain: Putative transporter SVOPL (492 aa).

Transmembrane regions (helical) follow at residues 48–68 (IALF…IMLI), 86–106 (VALV…LFGL), 121–141 (FLWG…IWFV), 179–199 (VFWL…IPTI), 203–223 (WLIR…KFIP), 281–301 (TLQI…VILA), 348–368 (IIST…INFL), 383–403 (LFFL…FLFM), 429–449 (ALGM…APFI), and 458–478 (ILGA…SAFT).

Belongs to the major facilitator superfamily.

Its subcellular location is the membrane. This is Putative transporter SVOPL (SVOPL) from Homo sapiens (Human).